The following is a 280-amino-acid chain: Nucleotide-binding protein Swoo_4243 (280 aa).

Gly8–Ser15 contributes to the ATP binding site. A GTP-binding site is contributed by Asp56–Asn59.

Belongs to the RapZ-like family.

Displays ATPase and GTPase activities. The sequence is that of Nucleotide-binding protein Swoo_4243 from Shewanella woodyi (strain ATCC 51908 / MS32).